Consider the following 134-residue polypeptide: ATP synthase epsilon chain (134 aa).

The protein belongs to the ATPase epsilon chain family. F-type ATPases have 2 components, CF(1) - the catalytic core - and CF(0) - the membrane proton channel. CF(1) has five subunits: alpha(3), beta(3), gamma(1), delta(1), epsilon(1). CF(0) has three main subunits: a, b and c.

The protein localises to the cell inner membrane. Functionally, produces ATP from ADP in the presence of a proton gradient across the membrane. In Solibacter usitatus (strain Ellin6076), this protein is ATP synthase epsilon chain.